The sequence spans 60 residues: UPF0434 protein CKO_02153 (60 aa).

This sequence belongs to the UPF0434 family.

This Citrobacter koseri (strain ATCC BAA-895 / CDC 4225-83 / SGSC4696) protein is UPF0434 protein CKO_02153.